The primary structure comprises 129 residues: Copper chaperone GriE (129 aa).

Positions 1–37 (MPMNRREMVMATTGAALAAAAAVPLLSGGEGEGAAEA) form a signal peptide, tat-type signal. The segment at 32 to 51 (EGAAEAAAAPAKATGRGREH) is disordered. Positions 34–45 (AAEAAAAPAKAT) are enriched in low complexity.

Belongs to the melC1 family. Predicted to be exported by the Tat system. The position of the signal peptide cleavage has not been experimentally proven.

Its function is as follows. Involved in the transfer of Cu(2+) ions to the apo form of o-aminophenol oxidase GriF in the grixazone biosynthetic pathway. The chain is Copper chaperone GriE (griE) from Streptomyces griseus subsp. griseus (strain JCM 4626 / CBS 651.72 / NBRC 13350 / KCC S-0626 / ISP 5235).